Here is a 244-residue protein sequence, read N- to C-terminus: Venom nerve growth factor 1 (244 aa).

An N-terminal signal peptide occupies residues 1–18; sequence MSMLCYTLIIAFLIGIWA. A propeptide spanning residues 19–125 is cleaved from the precursor; that stretch reads APKSEDNVPL…TLNRNIRAKR (107 aa). Positions 47–66 are enriched in basic and acidic residues; it reads GLKTSRNTDQRHPAPKKAED. Residues 47–67 are disordered; the sequence is GLKTSRNTDQRHPAPKKAEDQ. 3 disulfide bridges follow: C139–C205, C181–C233, and C193–C235.

The protein belongs to the NGF-beta family. In terms of assembly, homodimer; non-covalently linked. In terms of tissue distribution, expressed by the venom gland.

Its subcellular location is the secreted. In terms of biological role, nerve growth factor is important for the development and maintenance of the sympathetic and sensory nervous systems. It stimulates division and differentiation of sympathetic and embryonic sensory neurons as well as basal forebrain cholinergic neurons in the brain. Its relevance in the snake venom is not clear. However, it has been shown to inhibit metalloproteinase-dependent proteolysis of platelet glycoprotein Ib alpha, suggesting a metalloproteinase inhibition to prevent metalloprotease autodigestion and/or protection against prey proteases. Binds a lipid between the two protein chains in the homodimer. The lipid-bound form promotes histamine relase from mouse mast cells, contrary to the lipid-free form. The polypeptide is Venom nerve growth factor 1 (Notechis scutatus scutatus (Mainland tiger snake)).